Here is a 208-residue protein sequence, read N- to C-terminus: FMN-dependent NADH:quinone oxidoreductase 1 (208 aa).

Belongs to the azoreductase type 1 family. In terms of assembly, homodimer. It depends on FMN as a cofactor.

It carries out the reaction 2 a quinone + NADH + H(+) = 2 a 1,4-benzosemiquinone + NAD(+). The catalysed reaction is N,N-dimethyl-1,4-phenylenediamine + anthranilate + 2 NAD(+) = 2-(4-dimethylaminophenyl)diazenylbenzoate + 2 NADH + 2 H(+). Its function is as follows. Quinone reductase that provides resistance to thiol-specific stress caused by electrophilic quinones. Also exhibits azoreductase activity. Catalyzes the reductive cleavage of the azo bond in aromatic azo compounds to the corresponding amines. This is FMN-dependent NADH:quinone oxidoreductase 1 from Bacillus cereus (strain ATCC 14579 / DSM 31 / CCUG 7414 / JCM 2152 / NBRC 15305 / NCIMB 9373 / NCTC 2599 / NRRL B-3711).